A 271-amino-acid polypeptide reads, in one-letter code: Bifunctional protein FolD (271 aa).

Residues 154–156, Thr-181, and Ile-222 each bind NADP(+); that span reads GRS.

This sequence belongs to the tetrahydrofolate dehydrogenase/cyclohydrolase family. In terms of assembly, homodimer.

It catalyses the reaction (6R)-5,10-methylene-5,6,7,8-tetrahydrofolate + NADP(+) = (6R)-5,10-methenyltetrahydrofolate + NADPH. The catalysed reaction is (6R)-5,10-methenyltetrahydrofolate + H2O = (6R)-10-formyltetrahydrofolate + H(+). It participates in one-carbon metabolism; tetrahydrofolate interconversion. In terms of biological role, catalyzes the oxidation of 5,10-methylenetetrahydrofolate to 5,10-methenyltetrahydrofolate and then the hydrolysis of 5,10-methenyltetrahydrofolate to 10-formyltetrahydrofolate. This Thermosipho africanus (strain TCF52B) protein is Bifunctional protein FolD.